Reading from the N-terminus, the 158-residue chain is NADH-quinone oxidoreductase subunit B (158 aa).

Cys-37, Cys-38, Cys-102, and Cys-132 together coordinate [4Fe-4S] cluster.

It belongs to the complex I 20 kDa subunit family. NDH-1 is composed of 14 different subunits. Subunits NuoB, C, D, E, F, and G constitute the peripheral sector of the complex. [4Fe-4S] cluster is required as a cofactor.

It is found in the cell inner membrane. The enzyme catalyses a quinone + NADH + 5 H(+)(in) = a quinol + NAD(+) + 4 H(+)(out). Functionally, NDH-1 shuttles electrons from NADH, via FMN and iron-sulfur (Fe-S) centers, to quinones in the respiratory chain. The immediate electron acceptor for the enzyme in this species is believed to be ubiquinone. Couples the redox reaction to proton translocation (for every two electrons transferred, four hydrogen ions are translocated across the cytoplasmic membrane), and thus conserves the redox energy in a proton gradient. This Thiobacillus denitrificans (strain ATCC 25259 / T1) protein is NADH-quinone oxidoreductase subunit B.